Consider the following 166-residue polypeptide: Twist-related protein (166 aa).

The span at 1-18 (MMQEESSSPVSPVDSLSN) shows a compositional bias: low complexity. A disordered region spans residues 1 to 83 (MMQEESSSPV…RVMANVRERQ (83 aa)). Residues 28–39 (SKRGCRKRRSAR) are compositionally biased toward basic residues. The segment covering 57-75 (ASSTGSSPQSFEELQSQRV) has biased composition (polar residues). Residues 72–123 (SQRVMANVRERQRTQSLNEAFSSLRKIIPTLPSDKLSKIQTLKLASRYIDFL) form the bHLH domain.

Efficient DNA binding requires dimerization with another bHLH protein. Homodimer. As to expression, subset of mesodermal cells.

The protein resides in the nucleus. Its function is as follows. Probable transcription factor, which may be involved, with other proteins, in establishing the pattern of cell type-specific gene expression in mesodermal cell subgroups. This is Twist-related protein (twist1) from Xenopus laevis (African clawed frog).